Here is a 180-residue protein sequence, read N- to C-terminus: Nucleoplasmin-3 (180 aa).

At alanine 2 the chain carries N-acetylalanine. 2 positions are modified to phosphoserine: serine 13 and serine 16. Arginine 27 carries the post-translational modification Omega-N-methylarginine. The tract at residues 141–180 is disordered; it reads TMSNDVSEEESEEEEEEEDSDEEEAELCPILPAKKQGGRP. The span at 146 to 166 shows a compositional bias: acidic residues; that stretch reads VSEEESEEEEEEEDSDEEEAE. Serine 147, serine 151, and serine 160 each carry phosphoserine.

It belongs to the nucleoplasmin family. As to quaternary structure, interacts with NPM (via N-terminus). Forms a pentamer with NPM at a ratio 4:1 (NPM3/NPM). Two pentamers form a decamer. In terms of processing, phosphorylated.

It localises to the nucleus. The protein resides in the nucleolus. Its function is as follows. Plays a role in the regulation of diverse cellular processes such as ribosome biogenesis, chromatin remodeling or protein chaperoning. Modulates the histone chaperone function and the RNA-binding activity of nucleolar phosphoprotein B23/NPM. Efficiently mediates chromatin remodeling when included in a pentamer containing NPM3 and NPM. This chain is Nucleoplasmin-3 (NPM3), found in Pongo abelii (Sumatran orangutan).